Reading from the N-terminus, the 136-residue chain is MAKLTVEIVTPEKRILSVQADEAIVPGGRGLFGVRPGHTPFLSLMEPGALTLIESGRRESYFVAGGFVEVGNDKVLVLADAAEPVTGIDVEGARRRMAEAQERMKGMSSEDARFELEQATVRREAARIGAANTARA.

This sequence belongs to the ATPase epsilon chain family. F-type ATPases have 2 components, CF(1) - the catalytic core - and CF(0) - the membrane proton channel. CF(1) has five subunits: alpha(3), beta(3), gamma(1), delta(1), epsilon(1). CF(0) has three main subunits: a, b and c.

It is found in the cell inner membrane. Functionally, produces ATP from ADP in the presence of a proton gradient across the membrane. The chain is ATP synthase epsilon chain from Myxococcus xanthus (strain DK1622).